The sequence spans 206 residues: 2,3-bisphosphoglycerate-dependent phosphoglycerate mutase (206 aa).

Residues 9 to 16 (RHGQSEWN), 22 to 23 (TG), Arg61, 88 to 91 (ERNY), Lys99, 115 to 116 (RR), and 159 to 160 (GN) each bind substrate. His10 acts as the Tele-phosphohistidine intermediate in catalysis. The active-site Proton donor/acceptor is Glu88.

The protein belongs to the phosphoglycerate mutase family. BPG-dependent PGAM subfamily. Homodimer.

It carries out the reaction (2R)-2-phosphoglycerate = (2R)-3-phosphoglycerate. It participates in carbohydrate degradation; glycolysis; pyruvate from D-glyceraldehyde 3-phosphate: step 3/5. Catalyzes the interconversion of 2-phosphoglycerate and 3-phosphoglycerate. This is 2,3-bisphosphoglycerate-dependent phosphoglycerate mutase from Bartonella tribocorum (strain CIP 105476 / IBS 506).